The sequence spans 67 residues: Large ribosomal subunit protein bL35 (67 aa).

Residues 1–20 (MPKLKTKSGAKKRFVPKKSG) are disordered.

It belongs to the bacterial ribosomal protein bL35 family.

This is Large ribosomal subunit protein bL35 from Anaeromyxobacter dehalogenans (strain 2CP-C).